A 241-amino-acid polypeptide reads, in one-letter code: UDP-2,3-diacylglucosamine hydrolase (241 aa).

Positions 8, 10, 41, 79, and 114 each coordinate Mn(2+). Substrate is bound at residue 79 to 80 (NR). Positions 122, 160, 164, 167, and 195 each coordinate substrate. Positions 195 and 197 each coordinate Mn(2+).

This sequence belongs to the LpxH family. Mn(2+) serves as cofactor.

It is found in the cell inner membrane. It catalyses the reaction UDP-2-N,3-O-bis[(3R)-3-hydroxytetradecanoyl]-alpha-D-glucosamine + H2O = 2-N,3-O-bis[(3R)-3-hydroxytetradecanoyl]-alpha-D-glucosaminyl 1-phosphate + UMP + 2 H(+). The protein operates within glycolipid biosynthesis; lipid IV(A) biosynthesis; lipid IV(A) from (3R)-3-hydroxytetradecanoyl-[acyl-carrier-protein] and UDP-N-acetyl-alpha-D-glucosamine: step 4/6. Hydrolyzes the pyrophosphate bond of UDP-2,3-diacylglucosamine to yield 2,3-diacylglucosamine 1-phosphate (lipid X) and UMP by catalyzing the attack of water at the alpha-P atom. Involved in the biosynthesis of lipid A, a phosphorylated glycolipid that anchors the lipopolysaccharide to the outer membrane of the cell. The chain is UDP-2,3-diacylglucosamine hydrolase from Aeromonas hydrophila subsp. hydrophila (strain ATCC 7966 / DSM 30187 / BCRC 13018 / CCUG 14551 / JCM 1027 / KCTC 2358 / NCIMB 9240 / NCTC 8049).